Here is an 89-residue protein sequence, read N- to C-terminus: Small ribosomal subunit protein uS15 (89 aa).

This sequence belongs to the universal ribosomal protein uS15 family. As to quaternary structure, part of the 30S ribosomal subunit. Forms a bridge to the 50S subunit in the 70S ribosome, contacting the 23S rRNA.

Functionally, one of the primary rRNA binding proteins, it binds directly to 16S rRNA where it helps nucleate assembly of the platform of the 30S subunit by binding and bridging several RNA helices of the 16S rRNA. Its function is as follows. Forms an intersubunit bridge (bridge B4) with the 23S rRNA of the 50S subunit in the ribosome. In Thermobifida fusca (strain YX), this protein is Small ribosomal subunit protein uS15.